Consider the following 624-residue polypeptide: MNLEQLYDVIVVGGGHAGTEAALAAARLGVKTLLLTHNIDLLGQMSCNPAIGGIGKGHLVKEIDALDGAMAKAADQAGIQFRILNASKGPAVRATRAQADRVLYRKAIRTQLQSQANLTIFQQAVDDLKIEGGLVTGVVTQMGLTLKARAVVLTVGTFLGGKIHVGMNQYAGGRAGDPPSIALSKSLRDLDLPVGRLKTGTPPRIDRRTIDFSQMVEQPGDTPVPVFSYLGTASDHPQQVPCHITHTTEATHDIIRNNLDKSPMYAGVIEGVGPRYCPSIEDKIVRFADKTSHQIFVEPEGLTTEEIYPNGISTSLPFEVQVQFVRTIKGFENAHITRPGYAIEYDYFDPRGLTSFLQTKAIPNLFFAGQINGTTGYEEAAAQGIIAGMNAALQIKDQELWCPRRDEAYIGVLIDDLITCGTQEPYRMFTSRAEYRLLLREDNADLRLTEKGRQLGLVGDERWESFSKKREAIESTQALLHNSWVRVHHNDLFKEALLNPMQHDCRAAEFLKRPEINYQHLLMMDDLNLPELPQEITEQIEIQNKYAGYIDRQQQEIEKLRKHENTMLPETLDYNDVVGLSSEVIQKLNRIKPTSLAQAGRISGVTPAALSLLLVHLKKSRLPV.

FAD is bound by residues 13–18 (GGGHAG), Val125, and Ser180. Residue 273–287 (GPRYCPSIEDKIVRF) coordinates NAD(+). Gln370 is an FAD binding site.

Belongs to the MnmG family. Homodimer. Heterotetramer of two MnmE and two MnmG subunits. Requires FAD as cofactor.

It is found in the cytoplasm. Functionally, NAD-binding protein involved in the addition of a carboxymethylaminomethyl (cmnm) group at the wobble position (U34) of certain tRNAs, forming tRNA-cmnm(5)s(2)U34. This chain is tRNA uridine 5-carboxymethylaminomethyl modification enzyme MnmG, found in Legionella pneumophila (strain Paris).